The chain runs to 376 residues: Chaperone protein DnaJ (376 aa).

The J domain occupies 4–70 (DYYQILGVSK…QKRAAYDRFG (67 aa)). The CR-type zinc-finger motif lies at 139-217 (GVEKNISFSS…CHGLGRYHKQ (79 aa)). Residues Cys152, Cys155, Cys169, Cys172, Cys191, Cys194, Cys205, and Cys208 each contribute to the Zn(2+) site. 4 CXXCXGXG motif repeats span residues 152 to 159 (CDTCHGSG), 169 to 176 (CDACGGVG), 191 to 198 (CHKCQGNG), and 205 to 212 (CKKCHGLG).

This sequence belongs to the DnaJ family. As to quaternary structure, homodimer. Requires Zn(2+) as cofactor.

It localises to the cytoplasm. Its function is as follows. Participates actively in the response to hyperosmotic and heat shock by preventing the aggregation of stress-denatured proteins and by disaggregating proteins, also in an autonomous, DnaK-independent fashion. Unfolded proteins bind initially to DnaJ; upon interaction with the DnaJ-bound protein, DnaK hydrolyzes its bound ATP, resulting in the formation of a stable complex. GrpE releases ADP from DnaK; ATP binding to DnaK triggers the release of the substrate protein, thus completing the reaction cycle. Several rounds of ATP-dependent interactions between DnaJ, DnaK and GrpE are required for fully efficient folding. Also involved, together with DnaK and GrpE, in the DNA replication of plasmids through activation of initiation proteins. The polypeptide is Chaperone protein DnaJ (Rickettsia bellii (strain RML369-C)).